A 102-amino-acid polypeptide reads, in one-letter code: uncharacterized protein (102 aa).

Transmembrane regions (helical) follow at residues 28–48 (YLNLLLILEAILCPVDSLISI) and 81–101 (LSVLYLDLCCSGLIIAEAGIG).

It is found in the membrane. This is an uncharacterized protein from Saccharomyces cerevisiae (strain ATCC 204508 / S288c) (Baker's yeast).